The following is a 112-amino-acid chain: Large ribosomal subunit protein bL17 (112 aa).

The protein belongs to the bacterial ribosomal protein bL17 family. In terms of assembly, part of the 50S ribosomal subunit. Contacts protein L32.

This chain is Large ribosomal subunit protein bL17, found in Moorella thermoacetica (strain ATCC 39073 / JCM 9320).